The primary structure comprises 147 residues: UPF0306 protein YhbP (147 aa).

The protein belongs to the UPF0306 family.

This Escherichia coli (strain SMS-3-5 / SECEC) protein is UPF0306 protein YhbP.